The chain runs to 136 residues: Aspartate 1-decarboxylase (136 aa).

Serine 25 acts as the Schiff-base intermediate with substrate; via pyruvic acid in catalysis. Serine 25 carries the post-translational modification Pyruvic acid (Ser). Threonine 57 contacts substrate. The active-site Proton donor is tyrosine 58. 73 to 75 (GAA) serves as a coordination point for substrate. The interval 117-136 (IFQLGEETTPEEAPSLEQRN) is disordered.

Belongs to the PanD family. In terms of assembly, heterooctamer of four alpha and four beta subunits. Pyruvate serves as cofactor. Post-translationally, is synthesized initially as an inactive proenzyme, which is activated by self-cleavage at a specific serine bond to produce a beta-subunit with a hydroxyl group at its C-terminus and an alpha-subunit with a pyruvoyl group at its N-terminus.

The protein resides in the cytoplasm. It catalyses the reaction L-aspartate + H(+) = beta-alanine + CO2. The protein operates within cofactor biosynthesis; (R)-pantothenate biosynthesis; beta-alanine from L-aspartate: step 1/1. Catalyzes the pyruvoyl-dependent decarboxylation of aspartate to produce beta-alanine. In Chloroherpeton thalassium (strain ATCC 35110 / GB-78), this protein is Aspartate 1-decarboxylase.